Reading from the N-terminus, the 466-residue chain is Asparagine--tRNA ligase (466 aa).

Belongs to the class-II aminoacyl-tRNA synthetase family. Homodimer.

It localises to the cytoplasm. The catalysed reaction is tRNA(Asn) + L-asparagine + ATP = L-asparaginyl-tRNA(Asn) + AMP + diphosphate + H(+). The polypeptide is Asparagine--tRNA ligase (Shewanella sp. (strain MR-7)).